The sequence spans 458 residues: UPF0210 protein Mevan_0738 (458 aa).

This sequence belongs to the UPF0210 family.

This is UPF0210 protein Mevan_0738 from Methanococcus vannielii (strain ATCC 35089 / DSM 1224 / JCM 13029 / OCM 148 / SB).